We begin with the raw amino-acid sequence, 327 residues long: DNA-directed RNA polymerase subunit alpha (327 aa).

The alpha N-terminal domain (alpha-NTD) stretch occupies residues 1–233 (MQNSASEFLK…DQLSIFADLQ (233 aa)). Residues 247–327 (IDPILLRPVD…NWPPAGLEKP (81 aa)) are alpha C-terminal domain (alpha-CTD).

It belongs to the RNA polymerase alpha chain family. As to quaternary structure, homodimer. The RNAP catalytic core consists of 2 alpha, 1 beta, 1 beta' and 1 omega subunit. When a sigma factor is associated with the core the holoenzyme is formed, which can initiate transcription.

It catalyses the reaction RNA(n) + a ribonucleoside 5'-triphosphate = RNA(n+1) + diphosphate. DNA-dependent RNA polymerase catalyzes the transcription of DNA into RNA using the four ribonucleoside triphosphates as substrates. The protein is DNA-directed RNA polymerase subunit alpha of Chromobacterium violaceum (strain ATCC 12472 / DSM 30191 / JCM 1249 / CCUG 213 / NBRC 12614 / NCIMB 9131 / NCTC 9757 / MK).